Here is a 450-residue protein sequence, read N- to C-terminus: ATP-dependent protease ATPase subunit HslU (450 aa).

Residues Val-29, 71-76, Asp-261, Glu-328, and Arg-400 contribute to the ATP site; that span reads GVGKTE.

This sequence belongs to the ClpX chaperone family. HslU subfamily. A double ring-shaped homohexamer of HslV is capped on each side by a ring-shaped HslU homohexamer. The assembly of the HslU/HslV complex is dependent on binding of ATP.

The protein localises to the cytoplasm. Its function is as follows. ATPase subunit of a proteasome-like degradation complex; this subunit has chaperone activity. The binding of ATP and its subsequent hydrolysis by HslU are essential for unfolding of protein substrates subsequently hydrolyzed by HslV. HslU recognizes the N-terminal part of its protein substrates and unfolds these before they are guided to HslV for hydrolysis. This chain is ATP-dependent protease ATPase subunit HslU, found in Rickettsia conorii (strain ATCC VR-613 / Malish 7).